We begin with the raw amino-acid sequence, 334 residues long: H-2 class I histocompatibility antigen, Q7 alpha chain (334 aa).

Positions 1–21 are cleaved as a signal peptide; that stretch reads MALTMLLLLVAAALTLIETRA. The alpha-1 stretch occupies residues 22-111; that stretch reads GQHSLQYFHT…AQSYYNQSKG (90 aa). Residues 22 to 310 lie on the Extracellular side of the membrane; the sequence is GQHSLQYFHT…PPYTVSNMAT (289 aa). An N-linked (GlcNAc...) asparagine glycan is attached at N107. Positions 112–203 are alpha-2; sequence GSHTLQWMYG…QLGKETLLRT (92 aa). 2 disulfides stabilise this stretch: C122–C185 and C224–C280. Residues 204–295 are alpha-3; sequence DPPKAHVTHH…GLPEPLTLRW (92 aa). Residues 206–294 enclose the Ig-like C1-type domain; sequence PKAHVTHHPR…EGLPEPLTLR (89 aa). An N-linked (GlcNAc...) asparagine glycan is attached at N277. The tract at residues 296–310 is connecting peptide; that stretch reads GRWEPPPYTVSNMAT. A helical membrane pass occupies residues 311 to 332; the sequence is IAVVVDLGAVAIIGAVVAFVMN.

It belongs to the MHC class I family. In terms of assembly, heterodimer of an alpha chain and a beta chain (beta-2-microglobulin).

The protein localises to the membrane. Functionally, involved in the presentation of foreign antigens to the immune system. In Mus musculus (Mouse), this protein is H-2 class I histocompatibility antigen, Q7 alpha chain (H2-Q7).